The chain runs to 265 residues: Diphthine synthase (265 aa).

Residues Leu-9, Asp-85, Ile-88, 113-114, Leu-168, Ala-211, and His-236 contribute to the S-adenosyl-L-methionine site; that span reads TA.

The protein belongs to the diphthine synthase family. In terms of assembly, homodimer.

The enzyme catalyses 2-[(3S)-amino-3-carboxypropyl]-L-histidyl-[translation elongation factor 2] + 3 S-adenosyl-L-methionine = diphthine-[translation elongation factor 2] + 3 S-adenosyl-L-homocysteine + 3 H(+). It functions in the pathway protein modification; peptidyl-diphthamide biosynthesis. In terms of biological role, S-adenosyl-L-methionine-dependent methyltransferase that catalyzes the trimethylation of the amino group of the modified target histidine residue in translation elongation factor 2 (EF-2), to form an intermediate called diphthine. The three successive methylation reactions represent the second step of diphthamide biosynthesis. This Halorubrum lacusprofundi (strain ATCC 49239 / DSM 5036 / JCM 8891 / ACAM 34) protein is Diphthine synthase.